A 309-amino-acid chain; its full sequence is Methionyl-tRNA formyltransferase (309 aa).

109-112 lines the (6S)-5,6,7,8-tetrahydrofolate pocket; it reads SLLP.

This sequence belongs to the Fmt family.

It catalyses the reaction L-methionyl-tRNA(fMet) + (6R)-10-formyltetrahydrofolate = N-formyl-L-methionyl-tRNA(fMet) + (6S)-5,6,7,8-tetrahydrofolate + H(+). Functionally, attaches a formyl group to the free amino group of methionyl-tRNA(fMet). The formyl group appears to play a dual role in the initiator identity of N-formylmethionyl-tRNA by promoting its recognition by IF2 and preventing the misappropriation of this tRNA by the elongation apparatus. The chain is Methionyl-tRNA formyltransferase from Clostridioides difficile (strain 630) (Peptoclostridium difficile).